The primary structure comprises 405 residues: Diaminopimelate decarboxylase (405 aa).

K46 carries the post-translational modification N6-(pyridoxal phosphate)lysine. Residues G225 and E259–R262 each bind pyridoxal 5'-phosphate. Positions 262, 298, and 302 each coordinate substrate. C329 (proton donor) is an active-site residue. Residues E330 and Y358 each coordinate substrate. Y358 is a pyridoxal 5'-phosphate binding site.

Belongs to the Orn/Lys/Arg decarboxylase class-II family. LysA subfamily. Homodimer. Requires pyridoxal 5'-phosphate as cofactor.

The catalysed reaction is meso-2,6-diaminopimelate + H(+) = L-lysine + CO2. The protein operates within amino-acid biosynthesis; L-lysine biosynthesis via DAP pathway; L-lysine from DL-2,6-diaminopimelate: step 1/1. Its function is as follows. Specifically catalyzes the decarboxylation of meso-diaminopimelate (meso-DAP) to L-lysine. In Helicobacter pylori (Campylobacter pylori), this protein is Diaminopimelate decarboxylase.